The following is a 152-amino-acid chain: Nucleoside diphosphate kinase A 2 (152 aa).

ATP-binding residues include K12, F60, R88, T94, R105, and N115. H118 functions as the Pros-phosphohistidine intermediate in the catalytic mechanism.

Belongs to the NDK family. As to quaternary structure, homohexamer. Mg(2+) serves as cofactor. The N-terminus is blocked.

The protein localises to the cytoplasm. Its subcellular location is the cell membrane. It is found in the nucleus. The enzyme catalyses a 2'-deoxyribonucleoside 5'-diphosphate + ATP = a 2'-deoxyribonucleoside 5'-triphosphate + ADP. It carries out the reaction a ribonucleoside 5'-diphosphate + ATP = a ribonucleoside 5'-triphosphate + ADP. Autophosphorylation at His-118 increases serine/threonine protein kinase activity of the enzyme. Interaction with the SET complex inhibits exonuclease activity. Functionally, major role in the synthesis of nucleoside triphosphates other than ATP. Possesses nucleoside-diphosphate kinase, serine/threonine-specific protein kinase, geranyl and farnesyl pyrophosphate kinase, histidine protein kinase and 3'-5' exonuclease activities. Involved in cell proliferation, differentiation and development, signal transduction, G protein-coupled receptor endocytosis, and gene expression. Required for neural development including neural patterning and cell fate determination. This is Nucleoside diphosphate kinase A 2 (NME1-2) from Bos taurus (Bovine).